A 97-amino-acid chain; its full sequence is MQKSEGFRSKTRYKLQKHPRQKGMAPLTRALKCYTEGDLVHVVLDPSVQKGMPHPKFHGKTGVVVAQRGSSFLVRVKDGGKYKDIIARPQHLRESKL.

Positions 1–24 (MQKSEGFRSKTRYKLQKHPRQKGM) are disordered. Residues 9 to 21 (SKTRYKLQKHPRQ) show a composition bias toward basic residues.

It belongs to the eukaryotic ribosomal protein eL21 family.

The sequence is that of Large ribosomal subunit protein eL21 from Methanococcus maripaludis (strain DSM 14266 / JCM 13030 / NBRC 101832 / S2 / LL).